The primary structure comprises 208 residues: Kinetochore protein Spc25 (208 aa).

Positions Ser31–Gly101 form a coiled coil.

The protein belongs to the SPC25 family. As to quaternary structure, component of the Ndc80 complex, which is composed of Ndc80, Nuf2 and Spc25.

Its subcellular location is the nucleus. The protein localises to the chromosome. It localises to the centromere. It is found in the kinetochore. In terms of biological role, acts as a component of the essential kinetochore-associated Ndc80 complex, which is required for chromosome segregation and spindle checkpoint activity during meiosis and mitosis. Required for kinetochore integrity and the organization of stable microtubule binding sites in the outer plate of the kinetochore. Participates in SAC signaling that responds specifically to disruptions in spindle microtubule dynamics. The NDC80 complex synergistically enhances the affinity of the SKA1 complex for microtubules and may allow the NDC80 complex to track depolymerizing microtubules. The polypeptide is Kinetochore protein Spc25 (Drosophila mojavensis (Fruit fly)).